A 296-amino-acid polypeptide reads, in one-letter code: tRNA (guanine(9)-N1)-methyltransferase (296 aa).

Residues 1–33 form a disordered region; the sequence is MTPETNNDETLSRPKPRAALPPVPEGMSKSQWK. An SAM-dependent MTase TRM10-type domain is found at 85–274; that stretch reads TPRVNVNQKD…SVLPARKLAE (190 aa). S-adenosyl-L-methionine contacts are provided by residues 181–182, Gly-201, 205–209, Cys-213, Leu-227, and 239–241; these read LT, DKNRH, and KVL. Asp-205 functions as the Proton acceptor in the catalytic mechanism. The segment at 277–296 is disordered; the sequence is DHAQESNSSSPAEEQDAQDI.

This sequence belongs to the class IV-like SAM-binding methyltransferase superfamily. TRM10 family. Monomer.

Its subcellular location is the cytoplasm. It is found in the nucleus. It carries out the reaction guanosine(9) in tRNA + S-adenosyl-L-methionine = N(1)-methylguanosine(9) in tRNA + S-adenosyl-L-homocysteine + H(+). In terms of biological role, S-adenosyl-L-methionine-dependent guanine N(1)-methyltransferase that catalyzes the formation of N(1)-methylguanine at position 9 (m1G9) in cytoplasmic tRNA. The polypeptide is tRNA (guanine(9)-N1)-methyltransferase (Eremothecium gossypii (strain ATCC 10895 / CBS 109.51 / FGSC 9923 / NRRL Y-1056) (Yeast)).